Reading from the N-terminus, the 152-residue chain is Deoxyuridine 5'-triphosphate nucleotidohydrolase (152 aa).

Residues 71–73, Asn-84, 88–90, and Met-98 each bind substrate; these read RSG and LID.

This sequence belongs to the dUTPase family. Requires Mg(2+) as cofactor.

It carries out the reaction dUTP + H2O = dUMP + diphosphate + H(+). The protein operates within pyrimidine metabolism; dUMP biosynthesis; dUMP from dCTP (dUTP route): step 2/2. Functionally, this enzyme is involved in nucleotide metabolism: it produces dUMP, the immediate precursor of thymidine nucleotides and it decreases the intracellular concentration of dUTP so that uracil cannot be incorporated into DNA. This Shewanella pealeana (strain ATCC 700345 / ANG-SQ1) protein is Deoxyuridine 5'-triphosphate nucleotidohydrolase.